The primary structure comprises 274 residues: Large ribosomal subunit protein uL2 (274 aa).

A disordered region spans residues 224-274 (VAMNPVDHPHGGGEGRTSGGRHPVTPWGIPTKGYKTRKNKRSNKLIVQKRK). Positions 257–274 (YKTRKNKRSNKLIVQKRK) are enriched in basic residues.

This sequence belongs to the universal ribosomal protein uL2 family. In terms of assembly, part of the 50S ribosomal subunit. Forms a bridge to the 30S subunit in the 70S ribosome.

One of the primary rRNA binding proteins. Required for association of the 30S and 50S subunits to form the 70S ribosome, for tRNA binding and peptide bond formation. It has been suggested to have peptidyltransferase activity; this is somewhat controversial. Makes several contacts with the 16S rRNA in the 70S ribosome. In Francisella philomiragia subsp. philomiragia (strain ATCC 25017 / CCUG 19701 / FSC 153 / O#319-036), this protein is Large ribosomal subunit protein uL2.